A 1163-amino-acid polypeptide reads, in one-letter code: MEVEASGTEDNGDGGAKEPEAVVSIDTETKEAADEAKSQETVPQTPTTSSDSSSSGGGGEATDGTPNAESADPPPPPPPPPPPPPSTPADSTAAAASPAVLTEMSPPPPASTSSSSSTPAAPINLLDTCAVCKQSLQNRDCEPKLLPCLHSFCLKCIPQPDRKITMPVQGPHGQDTRIVNVMRCTVCHQDYKQIDMVDNYFVKDTSEATNTSVENSTQVCTSCEDNASAIGFCVECGEWLCKTCIEAHQRVKFTKDHKIRKKEEVSPESVGTSGQRPVFCPVHKQEALKLFCETCDTLTCRDCQLLEHKEHRYQFLDEACQNQKGIIATFMTKLQEKRGLVEYSASEVQKRLKEVAETHKKVEHEIKIAVFTLINEINKKGKSLLQQLESVTKDRSMKLLSQQRDISVLAQQIIHVLNFTNWAITNGSSTALLYSKRLITYQLRLIMKARVDAVPPANGAVRFFCDPTFWAKNVVNLGNLVIEKVAPTAPPSNMMVNQQISPGHNHPGKHSGQINLAQLRLQHMQQAAIAQKHQQQHQHHQQQQHQHQHQQQQQQQQQQQQQQQQQQQQQQHQQQIQQQMRIASQMSQHPRQGAPQMIQQPPPRLISMQALHRGGVNGSSHMFPPHHLRMVSAQNRMPSAQPRLNGQPYPMMQPQLQRQHSNPGHAGPFPVASLHNISAANPTSPTSASMANAHMHRGPSSPVITPIELIPSVTNPENLPCLPDIPPIQLEDAGSSTLDNILSRYISANAYPTVGPTNPSPGPSTHSPGSSGLSNSHTPARPSSTSSTGSRGSSGTTVDQVKVKQEPGVEEECSYSGANVKTERTKDGRRSACMMSSPEGSLTPPLPILGSVSTGSVQDILRTLGENVKSEPQSDNLSSCTNPNSRATLTNGTSGSNGGQRGGATNANSQTTAGKEDDPNEDWCAVCQNGGELLCCDHCPKVFHITCHIPTLKSSPSGDWMCTFCRNLANPEIEYNCDDDPPRNKEKNEMAMSPEEQRRCERLLLHVFCHELSTEFQEPVPTSVPNYYKIIKHPMDLTLVKRKLQRKHPLHYKSPKEFVSDVRLVFSNCAKYNEMSRIIQVYDEEKQSNVQADSEVAEAGKAVSLYFEERLLEIFPEQTFPVVMEKETQIEAEKEDSDDSDDDIIQPKRKRLKVDTEMLLHIK.

A disordered region spans residues 1–119 (MEVEASGTED…ASTSSSSSTP (119 aa)). The span at 27–38 (TETKEAADEAKS) shows a compositional bias: basic and acidic residues. Low complexity predominate over residues 45-54 (TPTTSSDSSS). Positions 72–87 (DPPPPPPPPPPPPPST) are enriched in pro residues. Residues 88-99 (PADSTAAAASPA) are compositionally biased toward low complexity. The segment at 129-188 (CAVCKQSLQNRDCEPKLLPCLHSFCLKCIPQPDRKITMPVQGPHGQDTRIVNVMRCTVCH) adopts an RING-type zinc-finger fold. The B box-type 1; atypical zinc finger occupies 215–268 (NSTQVCTSCEDNASAIGFCVECGEWLCKTCIEAHQRVKFTKDHKIRKKEEVSPE). Zn(2+)-binding residues include Cys220, Cys223, Cys244, His257, Cys280, His283, Cys303, and His308. The segment at 275–316 (QRPVFCPVHKQEALKLFCETCDTLTCRDCQLLEHKEHRYQFL) adopts a B box-type 2 zinc-finger fold. Positions 345-369 (ASEVQKRLKEVAETHKKVEHEIKIA) form a coiled coil. The segment covering 524–533 (MQQAAIAQKH) has biased composition (low complexity). Disordered stretches follow at residues 524 to 555 (MQQA…QQQQ), 575 to 599 (QIQQ…QMIQ), 656 to 706 (LQRQ…VITP), 753 to 848 (TVGP…PLPI), and 867 to 918 (NVKS…KEDD). A compositionally biased stretch (basic residues) spans 534 to 548 (QQQHQHHQQQQHQHQ). The span at 580–590 (MRIASQMSQHP) shows a compositional bias: polar residues. Composition is skewed to low complexity over residues 678–691 (SAAN…ASMA) and 753–797 (TVGP…SGTT). Residues 821 to 830 (KTERTKDGRR) show a composition bias toward basic and acidic residues. Residues 870–889 (SEPQSDNLSSCTNPNSRATL) show a composition bias toward polar residues. The PHD-type zinc finger occupies 921–968 (EDWCAVCQNGGELLCCDHCPKVFHITCHIPTLKSSPSGDWMCTFCRNL). The Bromo domain maps to 991-1114 (AMSPEEQRRC…LYFEERLLEI (124 aa)). The disordered stretch occupies residues 1128–1147 (TQIEAEKEDSDDSDDDIIQP). Residues 1133 to 1144 (EKEDSDDSDDDI) show a composition bias toward acidic residues.

Its subcellular location is the nucleus. It catalyses the reaction S-ubiquitinyl-[E2 ubiquitin-conjugating enzyme]-L-cysteine + [acceptor protein]-L-lysine = [E2 ubiquitin-conjugating enzyme]-L-cysteine + N(6)-ubiquitinyl-[acceptor protein]-L-lysine.. Its pathway is protein modification; protein ubiquitination. Its function is as follows. May act as an E3 ubiquitin-protein ligase and a transcriptional repressor. Involved in the regulation of embryonic and adult hematopoiesis. Required for normal development and survival of both committed erythroid progenitor cells and posterior mesenchymal cells. The chain is E3 ubiquitin-protein ligase TRIM33 (trim33) from Danio rerio (Zebrafish).